The chain runs to 276 residues: NADPH-dependent 7-cyano-7-deazaguanine reductase (276 aa).

Position 83–85 (83–85 (IES)) interacts with substrate. Residue 85-86 (SK) participates in NADPH binding. Cys-184 serves as the catalytic Thioimide intermediate. The Proton donor role is filled by Asp-191. 223-224 (HE) provides a ligand contact to substrate. Residue 252-253 (RG) participates in NADPH binding.

The protein belongs to the GTP cyclohydrolase I family. QueF type 2 subfamily. As to quaternary structure, homodimer.

It localises to the cytoplasm. It carries out the reaction 7-aminomethyl-7-carbaguanine + 2 NADP(+) = 7-cyano-7-deazaguanine + 2 NADPH + 3 H(+). The protein operates within tRNA modification; tRNA-queuosine biosynthesis. Its function is as follows. Catalyzes the NADPH-dependent reduction of 7-cyano-7-deazaguanine (preQ0) to 7-aminomethyl-7-deazaguanine (preQ1). In Pseudomonas syringae pv. syringae (strain B728a), this protein is NADPH-dependent 7-cyano-7-deazaguanine reductase.